We begin with the raw amino-acid sequence, 152 residues long: Complexin (152 aa).

The interval 1 to 119 (MAAFIAKQMV…EEEDDDEFAK (119 aa)) is disordered. A compositionally biased stretch (acidic residues) spans 23–39 (DEGEKEGNENAEEEAAA). 2 stretches are compositionally biased toward basic and acidic residues: residues 41 to 82 (EEAR…VKEE) and 90 to 104 (DEGR…KEEL). The tract at residues 59–75 (EEEREEMRQTIRDKYGL) is interaction with the SNARE complex. Cys149 bears the Cysteine methyl ester mark. Residue Cys149 is the site of S-farnesyl cysteine attachment. The propeptide at 150-152 (SLQ) is removed in mature form.

This sequence belongs to the complexin/synaphin family. As to quaternary structure, binds to the SNARE core complex containing SNAP25, synaptobrevin and syntaxin-1.

The protein localises to the membrane. It localises to the cytoplasm. It is found in the cytosol. Its function is as follows. Positively regulates a late step in synaptic vesicle exocytosis. In Doryteuthis pealeii (Longfin inshore squid), this protein is Complexin (cpx).